The following is a 397-amino-acid chain: Enoyl-[acyl-carrier-protein] reductase [NADH] (397 aa).

NAD(+) contacts are provided by residues 48–53 (GASTGY), 74–75 (FE), 111–112 (DA), and 139–140 (LA). Y224 serves as a coordination point for substrate. Y234 functions as the Proton donor in the catalytic mechanism. NAD(+) is bound by residues K243 and 272–274 (VVT).

The protein belongs to the TER reductase family. As to quaternary structure, monomer.

It catalyses the reaction a 2,3-saturated acyl-[ACP] + NAD(+) = a (2E)-enoyl-[ACP] + NADH + H(+). It participates in lipid metabolism; fatty acid biosynthesis. In terms of biological role, involved in the final reduction of the elongation cycle of fatty acid synthesis (FAS II). Catalyzes the reduction of a carbon-carbon double bond in an enoyl moiety that is covalently linked to an acyl carrier protein (ACP). The protein is Enoyl-[acyl-carrier-protein] reductase [NADH] of Pseudomonas fluorescens (strain SBW25).